A 149-amino-acid polypeptide reads, in one-letter code: Calmodulin (149 aa).

A2 bears the N-acetylalanine mark. EF-hand domains follow at residues 8-43, 44-79, 81-116, and 117-149; these read EQIAEFKEAFSLFDKDGDGTITTKELGTVMRSLGQN, PTEAELQDMINEVDADGNGTIDFPEFLTMMARKMKD, DSEEEIREAFRVFDKDGNGFISAAELRHVMTNLGEK, and LTDEEVDEMIREADVDGDGQVNYEEFVNMMTNK. D21, D23, D25, T27, E32, D57, D59, N61, T63, E68, D94, D96, N98, and E105 together coordinate Ca(2+). K116 is modified (N6,N6,N6-trimethyllysine). Ca(2+)-binding residues include D130, D132, D134, Q136, and E141.

It belongs to the calmodulin family.

Its function is as follows. Calmodulin mediates the control of a large number of enzymes, ion channels and other proteins by Ca(2+). Among the enzymes to be stimulated by the calmodulin-Ca(2+) complex are a number of protein kinases and phosphatases. The polypeptide is Calmodulin (Ciona intestinalis (Transparent sea squirt)).